The sequence spans 288 residues: Rhythmically expressed gene 5 protein (288 aa).

Expressed in head, but not in the body. Expression levels oscillate with the circadian rhythm.

Functionally, involved in the generation of biological rhythms (Potential). In the head, oscillates in abundance with a daily peak during early night, even under constant darkness. Oscillation is dependent on period (per) function. This Drosophila melanogaster (Fruit fly) protein is Rhythmically expressed gene 5 protein (Reg-5).